Reading from the N-terminus, the 313-residue chain is B3 domain-containing transcription factor FUS3 (313 aa).

The TF-B3 DNA-binding region spans 92-194; it reads FQKELKNSDV…NYVIQARKAS (103 aa).

Interacts with KIN10. Phosphorylation by KIN10 increases its stability. Phosphorylated at one or more of the Ser-55, Ser-56 and/or Ser-57 residues. Expressed in cotyledons and hypocotyls.

It localises to the nucleus. Its activity is regulated as follows. Phosphorylation by KIN10 is required to positively regulates embryogenesis, seed yield, and plant growth at high temperature. Functionally, transcription regulator involved in gene regulation during late embryogenesis. Its expression to the epidermis is sufficient to control foliar organ identity by regulating positively the synthesis abscisic acid (ABA) and negatively gibberellin production. Negatively regulates TTG1 in the embryo. Positively regulates the abundance of the ABI3 protein in the seed. Cooperates with KIN10 to regulate developmental phase transitions and lateral organ development and act both as positive regulators of abscisic acid (ABA) signaling during germination. This is B3 domain-containing transcription factor FUS3 (FUS3) from Arabidopsis thaliana (Mouse-ear cress).